A 324-amino-acid chain; its full sequence is Polycomb complex protein BMI-1-B (324 aa).

The segment at 18 to 57 adopts an RING-type zinc-finger fold; that stretch reads CVLCGGYFIDATTIVECLHSFCKMCIVRYLETSKYCPICD. Residues 81–95 carry the Nuclear localization signal motif; it reads KLVPGLFKNEMKRRR. Residues 232–324 are disordered; it reads IKLSSPRNDM…TSHNGSNSLG (93 aa). Positions 256 to 279 are enriched in low complexity; sequence DKPNSPSIVAAPSTSSSMPSPNTP. Composition is skewed to polar residues over residues 280–295 and 303–324; these read VQST…TING and NGQT…NSLG.

As to quaternary structure, component of a PRC1-like complex. Homodimer. Interacts with cbx2.

It localises to the nucleus. Functionally, component of a Polycomb group (PcG) multiprotein PRC1-like complex, a complex class required to maintain the transcriptionally repressive state of many genes, including Hox genes, throughout development. PcG PRC1 complex acts via chromatin remodeling and modification of histones; it mediates monoubiquitination of histone H2A 'Lys-119', rendering chromatin heritably changed in its expressibility. In the PRC1 complex, it is required to stimulate the E3 ubiquitin-protein ligase activity of rnf2. The polypeptide is Polycomb complex protein BMI-1-B (bmi1b) (Danio rerio (Zebrafish)).